The chain runs to 334 residues: Glycerol-3-phosphate dehydrogenase [NAD(P)+] (334 aa).

W13, R33, and K106 together coordinate NADPH. 3 residues coordinate sn-glycerol 3-phosphate: K106, G137, and S139. A141 is an NADPH binding site. 5 residues coordinate sn-glycerol 3-phosphate: K192, D245, S255, R256, and N257. K192 (proton acceptor) is an active-site residue. Residue R256 coordinates NADPH. 2 residues coordinate NADPH: V280 and E282.

It belongs to the NAD-dependent glycerol-3-phosphate dehydrogenase family.

It localises to the cytoplasm. It catalyses the reaction sn-glycerol 3-phosphate + NAD(+) = dihydroxyacetone phosphate + NADH + H(+). The enzyme catalyses sn-glycerol 3-phosphate + NADP(+) = dihydroxyacetone phosphate + NADPH + H(+). The protein operates within membrane lipid metabolism; glycerophospholipid metabolism. Catalyzes the reduction of the glycolytic intermediate dihydroxyacetone phosphate (DHAP) to sn-glycerol 3-phosphate (G3P), the key precursor for phospholipid synthesis. The polypeptide is Glycerol-3-phosphate dehydrogenase [NAD(P)+] (Chlamydia trachomatis serovar L2 (strain ATCC VR-902B / DSM 19102 / 434/Bu)).